The sequence spans 297 residues: Nucleotide-binding protein Bxeno_A0336 (297 aa).

8-15 (GISGSGKS) contributes to the ATP binding site. A GTP-binding site is contributed by 57–60 (DARS).

The protein belongs to the RapZ-like family.

Displays ATPase and GTPase activities. This Paraburkholderia xenovorans (strain LB400) protein is Nucleotide-binding protein Bxeno_A0336.